Reading from the N-terminus, the 185-residue chain is MILPINTYSDEVLRRKAKPLKESDAQLEELISNMLESMRNAEGIGLAAPQVGVSLRLIVVDLSLAEGYEAASPMVVINPHILSVKSFNSMEEGCLSIPDVRGDVVRPSAIQLKYRDRNFEECIGEFDRLAARVIQHEIDHLDGTLFVDRMQRRDRRKIQKELDALSRGEINTNYPVAFHEDSVVK.

Cysteine 94 and histidine 136 together coordinate Fe cation. Glutamate 137 is a catalytic residue. Histidine 140 contributes to the Fe cation binding site.

It belongs to the polypeptide deformylase family. Requires Fe(2+) as cofactor.

The enzyme catalyses N-terminal N-formyl-L-methionyl-[peptide] + H2O = N-terminal L-methionyl-[peptide] + formate. Removes the formyl group from the N-terminal Met of newly synthesized proteins. Requires at least a dipeptide for an efficient rate of reaction. N-terminal L-methionine is a prerequisite for activity but the enzyme has broad specificity at other positions. The polypeptide is Peptide deformylase (Chlorobium phaeobacteroides (strain BS1)).